The primary structure comprises 1173 residues: Clustered mitochondria protein homolog (1173 aa).

Residues 1 to 21 (MSTIDLPTSSLPGSSGDPSGT) show a composition bias toward low complexity. A disordered region spans residues 1-25 (MSTIDLPTSSLPGSSGDPSGTEMSH). The Clu domain occupies 316–565 (VPHRADLSRT…SLFPLDAQFL (250 aa)). Residues 888 to 910 (KFTGKKGNKKKRNLGKSQNTTNR) are disordered. The segment covering 890 to 901 (TGKKGNKKKRNL) has biased composition (basic residues). The TPR repeat unit spans residues 984–1017 (ARAYCQLAMIYHQLEKKEEAVELARKAVIVCERF).

Belongs to the CLU family. In terms of assembly, may associate with the eukaryotic translation initiation factor 3 (eIF-3) complex.

It is found in the cytoplasm. Functionally, mRNA-binding protein involved in proper cytoplasmic distribution of mitochondria. In Schizosaccharomyces pombe (strain 972 / ATCC 24843) (Fission yeast), this protein is Clustered mitochondria protein homolog.